A 553-amino-acid polypeptide reads, in one-letter code: MQQVLENLTELPSSTGAEEIDLIFLKGIMENPIVKSLAKAHERLEDSKLEAVSDNNLELVNEILEDITPLISVDENVAELVGILKEPHFQSLLEAHDIVASKCYDSPPSSPEMNIPSLNNQLPVDAIRILGIHKKAGEPLGVTFRVENNDLVIARILHGGMIDRQGLLHVGDIIKEVNGHEVGNNPKELQELLKNISGSVTLKILPSYRDTITPQQSYVNMERHPAHVRQVFVKCHFDYNPFNDNLIPCKEAGLKFSKGEILQIVNREDPNWWQASHVKEGGSAGLIPSQFLEEKRKAFVRRDWDNSGPFCGTISNKKKKKMMYLTTRNAEFDRHEIQIYEEVAKMPPFQRKTLVLIGAQGVGRRSLKNRFIVLNPARFGTTVPFTSRKPREDEKDGQAYKFVSRSEMEADIKAGKYLEHGEYEGNLYGTKIDSILEVVQTGRTCILDVNPQALKVLRTSEFMPYVVFIAAPELETLRAMHKAVVDAGITTKLLTDSDLKKTVDESARIQRAYNHYFDLIIVNDNLDKAFEKLQTAIEKLRMEPQWVPISWVY.

2 consecutive L27 domains span residues 1 to 48 (MQQV…EDSK) and 49 to 107 (LEAV…YDSP). One can recognise a PDZ domain in the interval 129–208 (ILGIHKKAGE…SVTLKILPSY (80 aa)). The SH3 domain maps to 228–297 (VRQVFVKCHF…PSQFLEEKRK (70 aa)). Residues 351–538 (RKTLVLIGAQ…AFEKLQTAIE (188 aa)) enclose the Guanylate kinase-like domain. Y513 carries the phosphotyrosine modification.

This sequence belongs to the MAGUK family. As to quaternary structure, interacts with CADM1. Interacts with the LIN7 proteins.

The protein localises to the membrane. The polypeptide is Protein PALS2 (Mus musculus (Mouse)).